Reading from the N-terminus, the 134-residue chain is Small ribosomal subunit protein eS24A (134 aa).

S2 is modified (N-acetylserine). Residues 100-134 (IQKVARQQRKQRKNRGKKVFGTGKRLAKRKSKQQD) form a disordered region. Basic residues-rich tracts occupy residues 105 to 117 (RQQR…RGKK) and 124 to 134 (RLAKRKSKQQD).

This sequence belongs to the eukaryotic ribosomal protein eS24 family. As to quaternary structure, component of the small ribosomal subunit (SSU). Mature yeast ribosomes consist of a small (40S) and a large (60S) subunit. The 40S small subunit contains 1 molecule of ribosomal RNA (18S rRNA) and at least 33 different proteins. The large 60S subunit contains 3 rRNA molecules (25S, 5.8S and 5S rRNA) and at least 46 different proteins.

The protein localises to the cytoplasm. In terms of biological role, component of the ribosome, a large ribonucleoprotein complex responsible for the synthesis of proteins in the cell. The small ribosomal subunit (SSU) binds messenger RNAs (mRNAs) and translates the encoded message by selecting cognate aminoacyl-transfer RNA (tRNA) molecules. The large subunit (LSU) contains the ribosomal catalytic site termed the peptidyl transferase center (PTC), which catalyzes the formation of peptide bonds, thereby polymerizing the amino acids delivered by tRNAs into a polypeptide chain. The nascent polypeptides leave the ribosome through a tunnel in the LSU and interact with protein factors that function in enzymatic processing, targeting, and the membrane insertion of nascent chains at the exit of the ribosomal tunnel. The polypeptide is Small ribosomal subunit protein eS24A (rps2401) (Schizosaccharomyces pombe (strain 972 / ATCC 24843) (Fission yeast)).